Reading from the N-terminus, the 380-residue chain is O-phospho-L-seryl-tRNA:Cys-tRNA synthase (380 aa).

Pyridoxal 5'-phosphate-binding positions include A86 to R87, N192, and S215 to H217. K218 is modified (N6-(pyridoxal phosphate)lysine).

The protein belongs to the SepCysS family. In terms of assembly, homodimer. Interacts with SepRS. Pyridoxal 5'-phosphate serves as cofactor.

It catalyses the reaction O-phospho-L-seryl-tRNA(Cys) + hydrogen sulfide + H(+) = L-cysteinyl-tRNA(Cys) + phosphate. In terms of biological role, converts O-phospho-L-seryl-tRNA(Cys) (Sep-tRNA(Cys)) to L-cysteinyl-tRNA(Cys) (Cys-tRNA(Cys)). This chain is O-phospho-L-seryl-tRNA:Cys-tRNA synthase, found in Methanococcus maripaludis (strain C5 / ATCC BAA-1333).